We begin with the raw amino-acid sequence, 209 residues long: HTH-type transcriptional repressor BepR (209 aa).

In terms of domain architecture, HTH tetR-type spans 9–69 (AETREAILLA…SIIGRARFPQ (61 aa)). Residues 32 to 51 (TLTEIACYAGVTRGAIYFHF) constitute a DNA-binding region (H-T-H motif).

Functionally, represses expression of bepDE. This chain is HTH-type transcriptional repressor BepR (bepR), found in Brucella suis biovar 1 (strain 1330).